The primary structure comprises 883 residues: uncharacterized protein (883 aa).

The segment at 258–373 (INNQSDNQSN…NQFNKPDNEP (116 aa)) is disordered. 3 stretches are compositionally biased toward low complexity: residues 259-268 (NNQSDNQSNS), 277-317 (EPNG…SNSE), and 324-333 (NEPNTEPNTE). Residues 334–347 (SNGQSNSELNNQSD) show a composition bias toward polar residues. The span at 348–368 (NHPNNEPNSEPNNEPNNQFNK) shows a compositional bias: low complexity.

This sequence belongs to the mimivirus L137 family.

This is an uncharacterized protein from Acanthamoeba polyphaga mimivirus (APMV).